The following is a 2024-amino-acid chain: Pericentriolar material 1 protein (2024 aa).

A disordered region spans residues M1–M92. Residue A2 is modified to N-acetylalanine. Residues A2–T1460 form a mediates interaction with DZIP1 region. The span at R43–T61 shows a compositional bias: basic and acidic residues. A phosphoserine mark is found at S65, S68, S69, S93, S110, S116, and S119. A disordered region spans residues D111–R163. Composition is skewed to polar residues over residues S116 to R132 and Q147 to R163. N159 carries the phosphoserine; in variant Ser-159 modification. Positions K218–A301 form a coiled coil. The interval R354–E392 is disordered. Residues E369–P383 show a composition bias toward polar residues. S370 is modified (phosphoserine). S372 carries the phosphoserine; by PLK4 modification. Position 384 is a phosphoserine (S384). K399 carries the N6-acetyllysine modification. Residues M400 to H424 are a coiled coil. Disordered regions lie at residues R421–K492 and E523–I548. Composition is skewed to polar residues over residues L425–S445 and G456–E477. Positions S487–E543 form a coiled coil. Residue S588 is modified to Phosphoserine. Disordered regions lie at residues H614 to D652 and F699 to V726. Positions G618–G632 are enriched in acidic residues. Positions S634–S643 are enriched in low complexity. S643 carries the phosphoserine modification. A coiled-coil region spans residues E651–D682. Over residues Q708–K719 the composition is skewed to polar residues. Coiled-coil stretches lie at residues V726–A769 and S824–E858. T859 carries the phosphothreonine modification. Phosphoserine occurs at positions 861, 866, 869, and 872. Position 877 is a phosphothreonine (T877). Residues T915 to K947 are disordered. The segment covering A925 to G946 has biased composition (polar residues). Residues S960, S977, S988, and S991 each carry the phosphoserine modification. Residues T1063 to H1089 are a coiled coil. Disordered regions lie at residues Q1085–S1109 and F1152–W1211. Over residues H1089–G1099 the composition is skewed to basic and acidic residues. Positions F1152–K1173 are enriched in polar residues. Residues S1185 and S1188 each carry the phosphoserine modification. Positions E1192–E1201 are enriched in basic and acidic residues. Residues S1229 and S1231 each carry the phosphoserine modification. A compositionally biased stretch (polar residues) spans V1232–T1246. Positions V1232–V1342 are disordered. Residues S1257, S1260, S1262, and S1263 each carry the phosphoserine modification. An interaction with HAP1 region spans residues T1279–G1799. Residues K1296–N1313 are compositionally biased toward basic residues. 2 positions are modified to phosphoserine: S1318 and S1320. T1468 carries the post-translational modification Phosphothreonine. Positions I1515–N1539 form a coiled coil. Phosphoserine is present on residues S1573, S1697, S1730, S1765, S1768, S1776, and S1782. Disordered stretches follow at residues L1725–P1868 and E1880–V1944. Over residues S1768 to E1777 the composition is skewed to acidic residues. Polar residues predominate over residues I1783–G1797. The segment covering G1799 to P1815 has biased composition (acidic residues). The span at V1818 to E1827 shows a compositional bias: polar residues. The segment covering D1835–S1860 has biased composition (basic and acidic residues). Positions P1905–P1916 are enriched in low complexity. The tract at residues P1913–I2024 is interaction with BBS4. Polar residues predominate over residues A1924–A1933. S1958 and S1977 each carry phosphoserine. The tract at residues E2005–I2024 is disordered.

This sequence belongs to the PCM1 family. Self-associates. Interacts with C2CD3. Interacts with BBS4, BBS8, CETN3, HAP1, NDE1, NDEL1, MAP1LC3B, GABARAPAL2, and GABARAP. Interacts with CEP131; the interaction increases in response to ultraviolet light (UV) radiation. Associates with microtubule; association to microtubule is reduced in response to cellular stress, such as ultraviolet light (UV) radiation or heat shock, in a process that requires p38 MAP kinase signaling. Interacts with CFAP263. Interacts with SSX2IP. Interacts with CCDC13. Interacts with CEP290. Interacts with PARD6A. Interacts with KIAA0753/OFIP, CEP20/FOR20 and OFD1; the interaction with CEP20/FOR20 and OFD1 may be mediated by KIAA0753/OFIP. Interacts with CCDC66. Interacts with CCDC61. Interacts with DZIP1; localizes DZIP1 and the associated BBSome to centriolar satellite. Interacts with CSTPP1, TTLL1, TPGS1 and LRRC49. Interacts with CFAP53. Ubiquitinated. Undergoes monoubiquitination catalyzed by the E3 ubiquitin-protein ligase MIB1 in proliferating cells, preventing cilia formation. Monoubiquitination by MIB1 is inhibited in response to cellular stress, such as ultraviolet light (UV) radiation or heat shock, resulting in cilia formation initiation. Post-translationally, variant Ser-159 is phosphorylated. In terms of processing, phosphorylated on multiple serine and threonine residues by DYRK3 during the G2-to-M transition, after the nuclear-envelope breakdown. Phosphorylation by DYRK3 promotes disassembly of pericentriolar material. Phosphorylation at Ser-372 mediated by PLK4 is required to maintain the integrity of centriolar satellites. As to expression, expressed in blood, bone marrow, breast, lymph node, ovary and thyroid.

It localises to the cytoplasm. The protein localises to the cytoskeleton. The protein resides in the microtubule organizing center. It is found in the centrosome. Its subcellular location is the cytoplasmic granule. It localises to the centriolar satellite. The protein localises to the cilium basal body. Required for centrosome assembly and function. Essential for the correct localization of several centrosomal proteins including CEP250, CETN3, PCNT and NEK2. Required to anchor microtubules to the centrosome. Also involved in cilium biogenesis by recruiting the BBSome, a ciliary protein complex involved in cilium biogenesis, to the centriolar satellites. Recruits the tubulin polyglutamylase complex (TPGC) to centriolar satellites. The protein is Pericentriolar material 1 protein of Homo sapiens (Human).